A 186-amino-acid chain; its full sequence is Elongation factor P (186 aa).

It belongs to the elongation factor P family.

It localises to the cytoplasm. It functions in the pathway protein biosynthesis; polypeptide chain elongation. Functionally, involved in peptide bond synthesis. Stimulates efficient translation and peptide-bond synthesis on native or reconstituted 70S ribosomes in vitro. Probably functions indirectly by altering the affinity of the ribosome for aminoacyl-tRNA, thus increasing their reactivity as acceptors for peptidyl transferase. The chain is Elongation factor P from Beutenbergia cavernae (strain ATCC BAA-8 / DSM 12333 / CCUG 43141 / JCM 11478 / NBRC 16432 / NCIMB 13614 / HKI 0122).